Here is a 675-residue protein sequence, read N- to C-terminus: Electrogenic aspartate/glutamate antiporter SLC25A13, mitochondrial (675 aa).

Ala-2 bears the N-acetylalanine mark. The regulatory N-terminal domain stretch occupies residues 2–295 (AAAKVALTKR…TLADIERIAP (294 aa)). Over 2 to 331 (AAAKVALTKR…LLQVAESAYR (330 aa)) the chain is Mitochondrial intermembrane. 4 EF-hand domains span residues 51–86 (SQPN…SVLC), 87–122 (APDA…TTIH), 125–157 (IPFN…FLLE), and 158–193 (IQLE…IRPH). Residues Asp-66, Thr-68, Asp-70, Leu-72, and Glu-77 each coordinate Ca(2+). The segment at 296–311 (LEEGTLPFNLAEAQRQ) is linker loop domain. Residues 321–612 (VLLQVAESAY…LQRWFYIDFG (292 aa)) form a carrier domain region. Solcar repeat units follow at residues 326 to 418 (AESA…VRDK), 426 to 510 (VPLA…VKAS), and 518 to 606 (VSPG…LQRW). A helical membrane pass occupies residues 332–349 (FGLGSVAGAVGATAVYPI). At 350-392 (DLVKTRMQNQRSTGSFVGELMYKNSFDCFKKVLRYEGFFGLYR) the chain is on the mitochondrial matrix side. N6-acetyllysine occurs at positions 353 and 372. A helical membrane pass occupies residues 393–412 (GLLPQLLGVAPEKAIKLTVN). Residues 413 to 435 (DFVRDKFMHKDGSVPLAAEILAG) are Mitochondrial intermembrane-facing. Residues 436–449 (GCAGGSQVIFTNPL) form a helical membrane-spanning segment. Residues 450-484 (EIVKIRLQVAGEITTGPRVSALSVVRDLGFFGIYK) are Mitochondrial matrix-facing. N6-methyllysine is present on Lys-453. Lys-484 carries the N6-acetyllysine; alternate modification. Residue Lys-484 is modified to N6-succinyllysine; alternate. A helical membrane pass occupies residues 485 to 504 (GAKACFLRDIPFSAIYFPCY). Residues 505-523 (AHVKASFANEDGQVSPGSL) are Mitochondrial intermembrane-facing. The helical transmembrane segment at 524-541 (LLAGAIAGMPAASLVTPA) threads the bilayer. Residues 542-580 (DVIKTRLQVAARAGQTTYSGVIDCFRKILREEGPKALWK) lie on the Mitochondrial matrix side of the membrane. Lys-580 bears the N6-succinyllysine mark. A helical transmembrane segment spans residues 581–600 (GAGARVFRSSPQFGVTLLTY). At 601-675 (ELLQRWFYID…STSKAIGGGP (75 aa)) the chain is on the mitochondrial intermembrane side. The tract at residues 613-675 (GVKPMGSEPV…STSKAIGGGP (63 aa)) is C-terminal domain. An N6-acetyllysine modification is found at Lys-662. The residue at position 666 (Ser-666) is a Phosphoserine.

This sequence belongs to the mitochondrial carrier (TC 2.A.29) family. In terms of assembly, homodimer (via N-terminus). As to expression, high levels in liver and low levels in kidney, pancreas, placenta, heart and brain.

It localises to the mitochondrion inner membrane. The enzyme catalyses L-aspartate(in) + L-glutamate(out) + H(+)(out) = L-aspartate(out) + L-glutamate(in) + H(+)(in). The catalysed reaction is 3-sulfino-L-alanine(out) + L-glutamate(in) + H(+)(in) = 3-sulfino-L-alanine(in) + L-glutamate(out) + H(+)(out). It carries out the reaction 3-sulfino-L-alanine(out) + L-aspartate(in) = 3-sulfino-L-alanine(in) + L-aspartate(out). Its activity is regulated as follows. Activated by calcium-binding in the mitochondrial intermembrane space. Inhibited by pyridoxal 5'-phosphate, bathophenathroline, mercurials, diethyl pyrocarbonate and N-ethylmaleimide. Mitochondrial electrogenic aspartate/glutamate antiporter that favors efflux of aspartate and entry of glutamate and proton within the mitochondria as part of the malate-aspartate shuttle. Also mediates the uptake of L-cysteinesulfinate (3-sulfino-L-alanine) by mitochondria in exchange of L-glutamate and proton. Can also exchange L-cysteinesulfinate with aspartate in their anionic form without any proton translocation. Lacks transport activity towards gamma-aminobutyric acid (GABA). The sequence is that of Electrogenic aspartate/glutamate antiporter SLC25A13, mitochondrial from Homo sapiens (Human).